The primary structure comprises 267 residues: Taurine import ATP-binding protein TauB (267 aa).

An ABC transporter domain is found at 6–238 (FNEASLIYPA…DILAGAPASE (233 aa)). 43-50 (GRSGSGKT) is a binding site for ATP.

It belongs to the ABC transporter superfamily. Taurine importer (TC 3.A.1.17.1) family. In terms of assembly, the complex is composed of two ATP-binding proteins (TauB), two transmembrane proteins (TauC) and a solute-binding protein (TauA).

The protein localises to the cell inner membrane. It carries out the reaction taurine(out) + ATP + H2O = taurine(in) + ADP + phosphate + H(+). In terms of biological role, part of the ABC transporter complex TauABC involved in taurine import. Responsible for energy coupling to the transport system. The sequence is that of Taurine import ATP-binding protein TauB from Sinorhizobium fredii (strain NBRC 101917 / NGR234).